We begin with the raw amino-acid sequence, 342 residues long: Anthranilate phosphoribosyltransferase (342 aa).

Residues Gly-83, 86-87, Thr-91, 93-96, 111-119, and Ser-123 contribute to the 5-phospho-alpha-D-ribose 1-diphosphate site; these read GD, NVST, and KHGNRSVSG. Gly-83 is a binding site for anthranilate. Residue Ser-95 coordinates Mg(2+). Asn-114 lines the anthranilate pocket. Arg-169 contributes to the anthranilate binding site. Mg(2+) is bound by residues Asp-228 and Glu-229.

It belongs to the anthranilate phosphoribosyltransferase family. Homodimer. It depends on Mg(2+) as a cofactor.

The enzyme catalyses N-(5-phospho-beta-D-ribosyl)anthranilate + diphosphate = 5-phospho-alpha-D-ribose 1-diphosphate + anthranilate. It functions in the pathway amino-acid biosynthesis; L-tryptophan biosynthesis; L-tryptophan from chorismate: step 2/5. In terms of biological role, catalyzes the transfer of the phosphoribosyl group of 5-phosphorylribose-1-pyrophosphate (PRPP) to anthranilate to yield N-(5'-phosphoribosyl)-anthranilate (PRA). This is Anthranilate phosphoribosyltransferase from Halorhodospira halophila (strain DSM 244 / SL1) (Ectothiorhodospira halophila (strain DSM 244 / SL1)).